A 46-amino-acid polypeptide reads, in one-letter code: L-amino-acid oxidase (46 aa).

A glycan (N-linked (GlcNAc...) asparagine) is linked at Asn31.

The protein belongs to the flavin monoamine oxidase family. FIG1 subfamily. FAD serves as cofactor.

Its subcellular location is the secreted. It is found in the lysosome. The protein localises to the cytoplasmic vesicle. It localises to the secretory vesicle. The protein resides in the acrosome. The enzyme catalyses an L-alpha-amino acid + O2 + H2O = a 2-oxocarboxylate + H2O2 + NH4(+). The catalysed reaction is L-tryptophan + O2 + H2O = indole-3-pyruvate + H2O2 + NH4(+). It catalyses the reaction L-phenylalanine + O2 + H2O = 3-phenylpyruvate + H2O2 + NH4(+). It carries out the reaction L-tyrosine + O2 + H2O = 3-(4-hydroxyphenyl)pyruvate + H2O2 + NH4(+). The enzyme catalyses L-arginine + O2 + H2O = 5-guanidino-2-oxopentanoate + H2O2 + NH4(+). Its pathway is amino-acid degradation; L-tryptophan degradation via pyruvate pathway. Functionally, secreted L-amino-acid oxidase that acts as a key immunoregulator. Has preference for L-aromatic amino acids: converts phenylalanine (Phe), tyrosine (Tyr) and tryptophan (Trp) to phenylpyruvic acid (PP), hydroxyphenylpyruvic acid (HPP), and indole-3-pyruvic acid (I3P), respectively. Also has weak L-arginine oxidase activity. Acts as a negative regulator of anti-tumor immunity by mediating Trp degradation via an indole pyruvate pathway that activates the transcription factor AHR. IL4I1-mediated Trp catabolism generates I3P, giving rise to indole metabolites (indole-3-acetic acid (IAA) and indole-3-aldehyde (I3A)) and kynurenic acid, which act as ligands for AHR, a ligand-activated transcription factor that plays important roles in immunity and cancer. AHR activation by indoles following IL4I1-mediated Trp degradation enhances tumor progression by promoting cancer cell motility and suppressing adaptive immunity. Also has an immunoregulatory function in some immune cells, probably by mediating Trp degradation and promoting downstream AHR activation: inhibits T-cell activation and proliferation, promotes the differentiation of naive CD4(+) T-cells into FOXP3(+) regulatory T-cells (Treg) and regulates the development and function of B-cells. Also regulates M2 macrophage polarization by inhibiting T-cell activation. Also has antibacterial properties by inhibiting growth of Gram negative and Gram positive bacteria through the production of NH4(+) and H2O2. The sequence is that of L-amino-acid oxidase from Mus spretus (Western Mediterranean mouse).